Here is a 342-residue protein sequence, read N- to C-terminus: Phosphate acyltransferase (342 aa).

It belongs to the PlsX family. As to quaternary structure, homodimer. Probably interacts with PlsY.

It is found in the cytoplasm. The catalysed reaction is a fatty acyl-[ACP] + phosphate = an acyl phosphate + holo-[ACP]. Its pathway is lipid metabolism; phospholipid metabolism. Catalyzes the reversible formation of acyl-phosphate (acyl-PO(4)) from acyl-[acyl-carrier-protein] (acyl-ACP). This enzyme utilizes acyl-ACP as fatty acyl donor, but not acyl-CoA. The protein is Phosphate acyltransferase of Shewanella sp. (strain MR-4).